Consider the following 176-residue polypeptide: Nucleoside triphosphate/diphosphate phosphatase (176 aa).

Catalysis depends on Arg23, which acts as the Proton donor. Mg(2+)-binding residues include Asn87, Asp103, Asp105, Asp107, Asp120, and Glu123.

It belongs to the Ntdp family. Requires Mg(2+) as cofactor.

It catalyses the reaction a ribonucleoside 5'-triphosphate + H2O = a ribonucleoside 5'-diphosphate + phosphate + H(+). The enzyme catalyses a ribonucleoside 5'-diphosphate + H2O = a ribonucleoside 5'-phosphate + phosphate + H(+). Has nucleoside phosphatase activity towards nucleoside triphosphates and nucleoside diphosphates. The chain is Nucleoside triphosphate/diphosphate phosphatase from Bacillus anthracis (strain A0248).